The primary structure comprises 155 residues: Ribosomal RNA large subunit methyltransferase H (155 aa).

Residues Leu-72, Gly-104, and Leu-123–Phe-128 each bind S-adenosyl-L-methionine.

Belongs to the RNA methyltransferase RlmH family. Homodimer.

The protein resides in the cytoplasm. It carries out the reaction pseudouridine(1915) in 23S rRNA + S-adenosyl-L-methionine = N(3)-methylpseudouridine(1915) in 23S rRNA + S-adenosyl-L-homocysteine + H(+). In terms of biological role, specifically methylates the pseudouridine at position 1915 (m3Psi1915) in 23S rRNA. The protein is Ribosomal RNA large subunit methyltransferase H of Kosmotoga olearia (strain ATCC BAA-1733 / DSM 21960 / TBF 19.5.1).